The following is a 319-amino-acid chain: Protease HtpX homolog (319 aa).

2 helical membrane passes run Thr-6 to Gly-26 and Gly-28 to Ser-48. His-130 provides a ligand contact to Zn(2+). Glu-131 is a catalytic residue. Position 134 (His-134) interacts with Zn(2+). 2 helical membrane passes run Met-145–Gly-165 and Pro-172–Val-192. Residue Glu-201 coordinates Zn(2+). The disordered stretch occupies residues Glu-280 to Ser-319.

The protein belongs to the peptidase M48B family. Requires Zn(2+) as cofactor.

It is found in the cell inner membrane. This chain is Protease HtpX homolog, found in Sinorhizobium medicae (strain WSM419) (Ensifer medicae).